Consider the following 277-residue polypeptide: Acyl-coenzyme A thioesterase MBLAC2 (277 aa).

Zn(2+) is bound by residues H80, H82, D84, H85, H167, D186, and H228.

It belongs to the metallo-beta-lactamase superfamily. Glyoxalase II family. Requires Zn(2+) as cofactor.

The protein localises to the endoplasmic reticulum membrane. Its subcellular location is the cell membrane. The catalysed reaction is hexadecanoyl-CoA + H2O = hexadecanoate + CoA + H(+). It carries out the reaction dodecanoyl-CoA + H2O = dodecanoate + CoA + H(+). The enzyme catalyses tetradecanoyl-CoA + H2O = tetradecanoate + CoA + H(+). It catalyses the reaction octadecanoyl-CoA + H2O = octadecanoate + CoA + H(+). The catalysed reaction is a beta-lactam + H2O = a substituted beta-amino acid. In terms of biological role, acyl-CoA thioesterases are a group of enzymes that catalyze the hydrolysis of acyl-CoAs to the free fatty acid and coenzyme A (CoASH), providing the potential to regulate intracellular levels of acyl-CoAs, free fatty acids and CoASH. Has an acyl-CoA thioesterase activity towards the long chain fatty acyl-CoA thioester palmitoyl-CoA (hexadecanoyl-CoA; C16:0-CoA). Displays a substrate preference for fatty acyl-CoAs with chain-lengths C12-C18. The chain is Acyl-coenzyme A thioesterase MBLAC2 (MBLAC2) from Gallus gallus (Chicken).